A 266-amino-acid polypeptide reads, in one-letter code: Small ribosomal subunit protein eS1 (266 aa).

The segment at 236 to 266 (GAGTAAKATGDDTGAKVERADGYEPPIQESV) is disordered. The span at 244 to 257 (TGDDTGAKVERADG) shows a compositional bias: basic and acidic residues.

The protein belongs to the eukaryotic ribosomal protein eS1 family. Component of the small ribosomal subunit. Mature ribosomes consist of a small (40S) and a large (60S) subunit. The 40S subunit contains about 33 different proteins and 1 molecule of RNA (18S). The 60S subunit contains about 49 different proteins and 3 molecules of RNA (28S, 5.8S and 5S). Part of the small subunit (SSU) processome, composed of more than 70 proteins and the RNA chaperone small nucleolar RNA (snoRNA) U3.

It is found in the cytoplasm. Its subcellular location is the nucleus. The protein localises to the nucleolus. Its function is as follows. Component of the small ribosomal subunit. The ribosome is a large ribonucleoprotein complex responsible for the synthesis of proteins in the cell. Part of the small subunit (SSU) processome, first precursor of the small eukaryotic ribosomal subunit. During the assembly of the SSU processome in the nucleolus, many ribosome biogenesis factors, an RNA chaperone and ribosomal proteins associate with the nascent pre-rRNA and work in concert to generate RNA folding, modifications, rearrangements and cleavage as well as targeted degradation of pre-ribosomal RNA by the RNA exosome. May play a role during erythropoiesis. This Tetraodon nigroviridis (Spotted green pufferfish) protein is Small ribosomal subunit protein eS1 (rps3a).